We begin with the raw amino-acid sequence, 345 residues long: Succinylglutamate desuccinylase (345 aa).

Zn(2+) is bound by residues H64, E67, and H161. E225 is a catalytic residue.

It belongs to the AspA/AstE family. Succinylglutamate desuccinylase subfamily. It depends on Zn(2+) as a cofactor.

The catalysed reaction is N-succinyl-L-glutamate + H2O = L-glutamate + succinate. It functions in the pathway amino-acid degradation; L-arginine degradation via AST pathway; L-glutamate and succinate from L-arginine: step 5/5. Transforms N(2)-succinylglutamate into succinate and glutamate. This Shewanella piezotolerans (strain WP3 / JCM 13877) protein is Succinylglutamate desuccinylase.